The primary structure comprises 126 residues: Large ribosomal subunit protein bL17 (126 aa).

Belongs to the bacterial ribosomal protein bL17 family. Part of the 50S ribosomal subunit. Contacts protein L32.

The polypeptide is Large ribosomal subunit protein bL17 (Vibrio parahaemolyticus serotype O3:K6 (strain RIMD 2210633)).